We begin with the raw amino-acid sequence, 275 residues long: Beta-lactamase OXA-15 (275 aa).

Positions 1-21 are cleaved as a signal peptide; sequence MAIRIFAILFSIFSLATFAHA. The active-site Acyl-ester intermediate is serine 72. Lysine 75 carries the N6-carboxylysine modification. Residue 210-212 participates in substrate binding; the sequence is KTG.

Belongs to the class-D beta-lactamase family.

It catalyses the reaction a beta-lactam + H2O = a substituted beta-amino acid. In terms of biological role, hydrolyzes oxacillin, first-generation cephalosporins and ceftazidime. Does not hydrolyze cefotaxime or carbapenems. The polypeptide is Beta-lactamase OXA-15 (bla) (Pseudomonas aeruginosa).